A 511-amino-acid polypeptide reads, in one-letter code: Bifunctional purine biosynthesis protein PurH (511 aa).

An MGS-like domain is found at 1–145; it reads MKKRALVSVS…KNHKFVSVIV (145 aa).

Belongs to the PurH family.

The catalysed reaction is (6R)-10-formyltetrahydrofolate + 5-amino-1-(5-phospho-beta-D-ribosyl)imidazole-4-carboxamide = 5-formamido-1-(5-phospho-D-ribosyl)imidazole-4-carboxamide + (6S)-5,6,7,8-tetrahydrofolate. The enzyme catalyses IMP + H2O = 5-formamido-1-(5-phospho-D-ribosyl)imidazole-4-carboxamide. The protein operates within purine metabolism; IMP biosynthesis via de novo pathway; 5-formamido-1-(5-phospho-D-ribosyl)imidazole-4-carboxamide from 5-amino-1-(5-phospho-D-ribosyl)imidazole-4-carboxamide (10-formyl THF route): step 1/1. Its pathway is purine metabolism; IMP biosynthesis via de novo pathway; IMP from 5-formamido-1-(5-phospho-D-ribosyl)imidazole-4-carboxamide: step 1/1. In Bacillus anthracis (strain A0248), this protein is Bifunctional purine biosynthesis protein PurH.